The chain runs to 259 residues: Global transcriptional regulator CodY (259 aa).

The GAF domain stretch occupies residues 1–155; sequence MNLLQKTRKI…GATVVGMEIL (155 aa). Residues 203–222 constitute a DNA-binding region (H-T-H motif); sequence ASKIADRVGITRSVIVNALR. Ser-215 is modified (phosphoserine).

Belongs to the CodY family.

It is found in the cytoplasm. Functionally, DNA-binding global transcriptional regulator which is involved in the adaptive response to starvation and acts by directly or indirectly controlling the expression of numerous genes in response to nutrient availability. During rapid exponential growth, CodY is highly active and represses genes whose products allow adaptation to nutrient depletion. This is Global transcriptional regulator CodY from Geobacillus sp. (strain WCH70).